Consider the following 584-residue polypeptide: Alkaline nuclease (584 aa).

The interval 409–429 is disordered; sequence GGGADHHLRGSPGDSPPPIPF.

The protein belongs to the herpesviridae alkaline nuclease family. Interacts with major DNA-binding protein; this interaction increases the nuclease processivity of the alkaline exonuclease.

It localises to the host nucleus. It is found in the host cytoplasm. Plays a role in processing non linear or branched viral DNA intermediates in order to promote the production of mature packaged unit-length linear progeny viral DNA molecules. Exhibits endonuclease and exonuclease activities and accepts both double-stranded and single-stranded DNA as substrate. Exonuclease digestion of DNA is in the 5'-&gt; 3' direction and the products are 5'-monophosphate nucleosides. Additionally, forms a recombinase with the major DNA-binding protein, which displays strand exchange activity. This Homo sapiens (Human) protein is Alkaline nuclease (UL98).